Here is a 398-residue protein sequence, read N- to C-terminus: Elongation factor Tu (398 aa).

The region spanning 10–207 is the tr-type G domain; that stretch reads KIHLNVGTIG…ILDKNIPVPN (198 aa). A G1 region spans residues 19 to 26; the sequence is GHVDHGKT. 19 to 26 is a GTP binding site; the sequence is GHVDHGKT. Thr-26 contacts Mg(2+). The tract at residues 60 to 64 is G2; that stretch reads GITIS. The tract at residues 81–84 is G3; the sequence is DCPG. GTP-binding positions include 81–85 and 136–139; these read DCPGH and NKAD. Residues 136–139 form a G4 region; sequence NKAD. Residues 174 to 176 form a G5 region; it reads SAL.

Belongs to the TRAFAC class translation factor GTPase superfamily. Classic translation factor GTPase family. EF-Tu/EF-1A subfamily. In terms of assembly, monomer.

Its subcellular location is the cytoplasm. The catalysed reaction is GTP + H2O = GDP + phosphate + H(+). Its function is as follows. GTP hydrolase that promotes the GTP-dependent binding of aminoacyl-tRNA to the A-site of ribosomes during protein biosynthesis. The polypeptide is Elongation factor Tu (Carsonella ruddii (strain PV)).